We begin with the raw amino-acid sequence, 235 residues long: Thiamine-phosphate synthase (235 aa).

Residues 50–54 (QLRDK) and asparagine 91 each bind 4-amino-2-methyl-5-(diphosphooxymethyl)pyrimidine. Aspartate 92 and aspartate 111 together coordinate Mg(2+). A 4-amino-2-methyl-5-(diphosphooxymethyl)pyrimidine-binding site is contributed by serine 130. 160–162 (TPT) is a binding site for 2-[(2R,5Z)-2-carboxy-4-methylthiazol-5(2H)-ylidene]ethyl phosphate. A 4-amino-2-methyl-5-(diphosphooxymethyl)pyrimidine-binding site is contributed by lysine 163. Glycine 191 serves as a coordination point for 2-[(2R,5Z)-2-carboxy-4-methylthiazol-5(2H)-ylidene]ethyl phosphate.

Belongs to the thiamine-phosphate synthase family. Requires Mg(2+) as cofactor.

It catalyses the reaction 2-[(2R,5Z)-2-carboxy-4-methylthiazol-5(2H)-ylidene]ethyl phosphate + 4-amino-2-methyl-5-(diphosphooxymethyl)pyrimidine + 2 H(+) = thiamine phosphate + CO2 + diphosphate. The catalysed reaction is 2-(2-carboxy-4-methylthiazol-5-yl)ethyl phosphate + 4-amino-2-methyl-5-(diphosphooxymethyl)pyrimidine + 2 H(+) = thiamine phosphate + CO2 + diphosphate. The enzyme catalyses 4-methyl-5-(2-phosphooxyethyl)-thiazole + 4-amino-2-methyl-5-(diphosphooxymethyl)pyrimidine + H(+) = thiamine phosphate + diphosphate. The protein operates within cofactor biosynthesis; thiamine diphosphate biosynthesis; thiamine phosphate from 4-amino-2-methyl-5-diphosphomethylpyrimidine and 4-methyl-5-(2-phosphoethyl)-thiazole: step 1/1. Condenses 4-methyl-5-(beta-hydroxyethyl)thiazole monophosphate (THZ-P) and 2-methyl-4-amino-5-hydroxymethyl pyrimidine pyrophosphate (HMP-PP) to form thiamine monophosphate (TMP). The polypeptide is Thiamine-phosphate synthase (Mycobacterium leprae (strain TN)).